Here is an 819-residue protein sequence, read N- to C-terminus: Outer membrane usher protein CssD (819 aa).

The protein belongs to the fimbrial export usher family.

The protein localises to the cell outer membrane. In terms of biological role, involved in the export and assembly of C6 fimbrial subunits across the outer membrane. In Escherichia coli, this protein is Outer membrane usher protein CssD (cssD).